Here is a 1687-residue protein sequence, read N- to C-terminus: PH domain leucine-rich repeat-containing protein phosphatase 1 (1687 aa).

Methionine 1 carries the post-translational modification N-acetylmethionine. Disordered regions lie at residues 1-96 (MEPA…GGGA) and 230-406 (AAAP…AAPD). Over residues 78–96 (APQPAAGGAAPVPAAGGGA) the composition is skewed to low complexity. Position 286 is a phosphoserine (serine 286). Polar residues predominate over residues 314-326 (DTESFSLSPSAES). Serine 372 is modified (phosphoserine). Residues 492-592 (RIQLSGMYNV…WLRQVSKVAS (101 aa)) form the PH domain. LRR repeat units lie at residues 594–615 (RISSVDLSCCSLEHLPANLFYS), 617–638 (DLTHLNLKQNFLRQTPTLPAAR), 648–669 (KLKSLNLSNNHLGAFPSAVCSI), 671–692 (TLAELNVSCNALREVPAAVGDM), 694–715 (NLQTFLLDGNFLQSLPAELESM), 717–739 (QLSYLGLSFNEFTDIPEVLEKLT), 740–760 (AVDKLCMAGNCVETLRLQALR), 764–785 (HIKHVDLRLNILRKLMADEVDF), 788–809 (HVTQLDLRDNKLGDLDAMIFNN), 829–850 (FLKALYASSNELAQLDVYPVPN), 851–872 (YLSYMDVSRNCLESVPEWVCES), 874–895 (KLEVLDIGHNQICELPARLFCN), 897–918 (SLRKLLAGHNRLARLPERLERT), 919–940 (SVEVLDVQHNQITELPPNLLMK), 943–964 (SLRFLNASANKLETLPPATLSE), 969–989 (ILQELYLTNNCLTDKCVPLLT), 993–1014 (RLKILHMAYNRLQSFPASKMAK), 1017–1038 (ELEEIDISGNKLKAIPTTIMNC), 1040–1061 (RMHTVIAHSNCIEVFPEVMQLP), 1062–1083 (EVKCVDLSCNELSEITLPENLP), and 1085–1106 (KLQELDLTGNPRLALDHKSLEL). In terms of domain architecture, PPM-type phosphatase spans 1131–1378 (SHGYTEASGV…DSISAVVVQL (248 aa)). Aspartate 1166, glycine 1167, lysine 1330, and aspartate 1369 together coordinate Mn(2+). 2 disordered regions span residues 1414 to 1465 (DRPS…SSPA) and 1604 to 1687 (PGGY…DTPL). Positions 1424–1445 (SSSSGMASEISSELSTSEMSSE) are enriched in low complexity. Positions 1649–1669 (LPPPPQPPQPQPQPQPQPQPQ) are enriched in pro residues. The short motif at 1685-1687 (TPL) is the PDZ-binding element.

Interacts with the nucleotide free form of K-Ras (KRAS) via its LRR repeats. Interacts with AKT2, AKT3 and PRKCB. Interacts with WDR48 and USP12. It depends on Mn(2+) as a cofactor. As to expression, isoforms 1 and 2 are expressed in the retina.

It is found in the cytoplasm. It localises to the membrane. Its subcellular location is the nucleus. The catalysed reaction is O-phospho-L-seryl-[protein] + H2O = L-seryl-[protein] + phosphate. The enzyme catalyses O-phospho-L-threonyl-[protein] + H2O = L-threonyl-[protein] + phosphate. Its activity is regulated as follows. Insensitive to okadaic acid. Deubiquitination by WDR48-USP12 complex positively regulates PHLPP1 stability. In terms of biological role, protein phosphatase involved in regulation of Akt and PKC signaling. Mediates dephosphorylation in the C-terminal domain hydrophobic motif of members of the AGC Ser/Thr protein kinase family; specifically acts on 'Ser-473' of AKT2 and AKT3, 'Ser-660' of PRKCB and 'Ser-657' of PRKCA. Isoform 2 seems to have a major role in regulating Akt signaling in hippocampal neurons. Akt regulates the balance between cell survival and apoptosis through a cascade that primarily alters the function of transcription factors that regulate pro- and antiapoptotic genes. Dephosphorylation of 'Ser-473' of Akt triggers apoptosis and suppression of tumor growth. Dephosphorylation of PRKCA and PRKCB leads to their destabilization and degradation. Dephosphorylates STK4 on 'Thr-387' leading to STK4 activation and apoptosis. Dephosphorylates RPS6KB1 and is involved in regulation of cap-dependent translation. Inhibits cancer cell proliferation and may act as a tumor suppressor. Dephosphorylates RAF1 inhibiting its kinase activity. May act as a negative regulator of K-Ras signaling in membrane rafts. Involved in the hippocampus-dependent long-term memory formation. Involved in circadian control by regulating the consolidation of circadian periodicity after resetting. Involved in development and function of regulatory T-cells. In Mus musculus (Mouse), this protein is PH domain leucine-rich repeat-containing protein phosphatase 1 (Phlpp1).